A 106-amino-acid chain; its full sequence is Small ribosomal subunit protein uS10 (106 aa).

This sequence belongs to the universal ribosomal protein uS10 family. Part of the 30S ribosomal subunit.

Its function is as follows. Involved in the binding of tRNA to the ribosomes. The protein is Small ribosomal subunit protein uS10 of Pyrobaculum arsenaticum (strain DSM 13514 / JCM 11321 / PZ6).